Reading from the N-terminus, the 106-residue chain is BLOC-1-related complex subunit 7 (106 aa).

This sequence belongs to the BORCS7 family. In terms of assembly, component of the BLOC-one-related complex (BORC) which is composed of BLOC1S1, BLOC1S2, BORCS5, BORCS6, BORCS7, BORCS8, KXD1 and SNAPIN.

The protein resides in the lysosome membrane. As part of the BORC complex may play a role in lysosomes movement and localization at the cell periphery. Associated with the cytosolic face of lysosomes, the BORC complex may recruit ARL8B and couple lysosomes to microtubule plus-end-directed kinesin motor. This is BLOC-1-related complex subunit 7 from Homo sapiens (Human).